The sequence spans 331 residues: Phenylalanine--tRNA ligase alpha subunit (331 aa).

Glutamate 254 contacts Mg(2+).

It belongs to the class-II aminoacyl-tRNA synthetase family. Phe-tRNA synthetase alpha subunit type 1 subfamily. In terms of assembly, tetramer of two alpha and two beta subunits. Mg(2+) serves as cofactor.

Its subcellular location is the cytoplasm. It catalyses the reaction tRNA(Phe) + L-phenylalanine + ATP = L-phenylalanyl-tRNA(Phe) + AMP + diphosphate + H(+). The protein is Phenylalanine--tRNA ligase alpha subunit of Blochmanniella pennsylvanica (strain BPEN).